Here is a 182-residue protein sequence, read N- to C-terminus: RFKKIRRLGALPGLTSKRPRSGSDLKNQLRSGKRSQYRIRLEEKQKLRFHYGLTERQLLKYVHIAGKAKGSTGRVLLQLLEMRLDNILFRLGMASTIPGARQLVNHRHILVNGHIVDIPSYRCKPRDIITTKDKQRSKALIQNYIALSPHEELPNHLTIDPFQYKGLVNQIIDSKWIGLKIN.

The 62-residue stretch at 82–143 (MRLDNILFRL…KQRSKALIQN (62 aa)) folds into the S4 RNA-binding domain.

It belongs to the universal ribosomal protein uS4 family. As to quaternary structure, part of the 30S ribosomal subunit. Contacts protein S5. The interaction surface between S4 and S5 is involved in control of translational fidelity.

Its subcellular location is the plastid. It is found in the chloroplast. Its function is as follows. One of the primary rRNA binding proteins, it binds directly to 16S rRNA where it nucleates assembly of the body of the 30S subunit. Functionally, with S5 and S12 plays an important role in translational accuracy. The sequence is that of Small ribosomal subunit protein uS4c (rps4) from Iris domestica (Leopard lily).